A 119-amino-acid polypeptide reads, in one-letter code: Large ribosomal subunit protein bL20 (119 aa).

Belongs to the bacterial ribosomal protein bL20 family.

Its function is as follows. Binds directly to 23S ribosomal RNA and is necessary for the in vitro assembly process of the 50S ribosomal subunit. It is not involved in the protein synthesizing functions of that subunit. This is Large ribosomal subunit protein bL20 from Xanthomonas oryzae pv. oryzae (strain PXO99A).